We begin with the raw amino-acid sequence, 365 residues long: tRNA/tmRNA (uracil-C(5))-methyltransferase (365 aa).

Residues Gln-189, Tyr-217, Asn-222, Glu-238, and Asp-298 each contribute to the S-adenosyl-L-methionine site. The Nucleophile role is filled by Cys-323. Residue Glu-357 is the Proton acceptor of the active site.

This sequence belongs to the class I-like SAM-binding methyltransferase superfamily. RNA M5U methyltransferase family. TrmA subfamily.

The enzyme catalyses uridine(54) in tRNA + S-adenosyl-L-methionine = 5-methyluridine(54) in tRNA + S-adenosyl-L-homocysteine + H(+). It carries out the reaction uridine(341) in tmRNA + S-adenosyl-L-methionine = 5-methyluridine(341) in tmRNA + S-adenosyl-L-homocysteine + H(+). Dual-specificity methyltransferase that catalyzes the formation of 5-methyluridine at position 54 (m5U54) in all tRNAs, and that of position 341 (m5U341) in tmRNA (transfer-mRNA). The protein is tRNA/tmRNA (uracil-C(5))-methyltransferase of Psychromonas ingrahamii (strain DSM 17664 / CCUG 51855 / 37).